The chain runs to 507 residues: ATP synthase subunit alpha, chloroplastic (507 aa).

170–177 (GDRQTGKT) is a binding site for ATP.

This sequence belongs to the ATPase alpha/beta chains family. As to quaternary structure, F-type ATPases have 2 components, CF(1) - the catalytic core - and CF(0) - the membrane proton channel. CF(1) has five subunits: alpha(3), beta(3), gamma(1), delta(1), epsilon(1). CF(0) has four main subunits: a, b, b' and c.

The protein resides in the plastid. The protein localises to the chloroplast thylakoid membrane. The enzyme catalyses ATP + H2O + 4 H(+)(in) = ADP + phosphate + 5 H(+)(out). Functionally, produces ATP from ADP in the presence of a proton gradient across the membrane. The alpha chain is a regulatory subunit. The protein is ATP synthase subunit alpha, chloroplastic of Marchantia polymorpha (Common liverwort).